We begin with the raw amino-acid sequence, 33 residues long: Gastrin (33 aa).

The tract at residues 1 to 21 is disordered; it reads ELEPQGPPHLGTDLSKKQGPW. Gln-18 bears the Pyrrolidone carboxylic acid mark. Tyr-28 is modified (sulfotyrosine). Phe-33 carries the post-translational modification Phenylalanine amide.

This sequence belongs to the gastrin/cholecystokinin family.

It is found in the secreted. Functionally, gastrin stimulates the stomach mucosa to produce and secrete hydrochloric acid and the pancreas to secrete its digestive enzymes. It also stimulates smooth muscle contraction and increases blood circulation and water secretion in the stomach and intestine. The sequence is that of Gastrin (GAST) from Chinchilla chinchilla (Short-tailed chinchilla).